Here is an 813-residue protein sequence, read N- to C-terminus: Leucine--tRNA ligase (813 aa).

A 'HIGH' region motif is present at residues 41–51 (PYPSGTLHMGH). The short motif at 575-579 (KMSKS) is the 'KMSKS' region element. Lys-578 is a binding site for ATP.

It belongs to the class-I aminoacyl-tRNA synthetase family.

The protein localises to the cytoplasm. It carries out the reaction tRNA(Leu) + L-leucine + ATP = L-leucyl-tRNA(Leu) + AMP + diphosphate. The protein is Leucine--tRNA ligase of Francisella tularensis subsp. holarctica (strain FTNF002-00 / FTA).